We begin with the raw amino-acid sequence, 286 residues long: Ribose-phosphate pyrophosphokinase (286 aa).

ATP contacts are provided by residues aspartate 34–glutamate 36 and arginine 91–glutamine 92. Mg(2+) contacts are provided by histidine 124 and aspartate 161. Lysine 184 is an active-site residue. Residues arginine 186, aspartate 210, and serine 214 to threonine 218 each bind D-ribose 5-phosphate.

Belongs to the ribose-phosphate pyrophosphokinase family. Class III (archaeal) subfamily. The cofactor is Mg(2+).

It localises to the cytoplasm. The enzyme catalyses D-ribose 5-phosphate + ATP = 5-phospho-alpha-D-ribose 1-diphosphate + AMP + H(+). The protein operates within metabolic intermediate biosynthesis; 5-phospho-alpha-D-ribose 1-diphosphate biosynthesis; 5-phospho-alpha-D-ribose 1-diphosphate from D-ribose 5-phosphate (route I): step 1/1. Functionally, involved in the biosynthesis of the central metabolite phospho-alpha-D-ribosyl-1-pyrophosphate (PRPP) via the transfer of pyrophosphoryl group from ATP to 1-hydroxyl of ribose-5-phosphate (Rib-5-P). The sequence is that of Ribose-phosphate pyrophosphokinase from Thermoplasma acidophilum (strain ATCC 25905 / DSM 1728 / JCM 9062 / NBRC 15155 / AMRC-C165).